A 496-amino-acid polypeptide reads, in one-letter code: UDP-N-acetylmuramoylalanine--D-glutamate ligase (496 aa).

130–136 (GTNGKTT) provides a ligand contact to ATP.

It belongs to the MurCDEF family.

The protein resides in the cytoplasm. The enzyme catalyses UDP-N-acetyl-alpha-D-muramoyl-L-alanine + D-glutamate + ATP = UDP-N-acetyl-alpha-D-muramoyl-L-alanyl-D-glutamate + ADP + phosphate + H(+). It participates in cell wall biogenesis; peptidoglycan biosynthesis. Functionally, cell wall formation. Catalyzes the addition of glutamate to the nucleotide precursor UDP-N-acetylmuramoyl-L-alanine (UMA). The polypeptide is UDP-N-acetylmuramoylalanine--D-glutamate ligase (Mycobacterium bovis (strain ATCC BAA-935 / AF2122/97)).